The following is a 98-amino-acid chain: PqqA binding protein (98 aa).

This sequence belongs to the PqqD family. Monomer. Interacts with PqqE.

The protein operates within cofactor biosynthesis; pyrroloquinoline quinone biosynthesis. Its function is as follows. Functions as a PqqA binding protein and presents PqqA to PqqE, in the pyrroloquinoline quinone (PQQ) biosynthetic pathway. This is PqqA binding protein from Pseudomonas syringae pv. tomato (strain ATCC BAA-871 / DC3000).